We begin with the raw amino-acid sequence, 220 residues long: Vesicle-associated membrane protein 7 (220 aa).

Ala2 is subject to N-acetylalanine; partial. The Cytoplasmic segment spans residues 2 to 188 (AILFAVVARG…ARAMCMKNLK (187 aa)). The 104-residue stretch at 7 to 110 (VVARGTTILA…AMNSEFSSVL (104 aa)) folds into the Longin domain. Residues 125-185 (KVMETQAQVD…RNLARAMCMK (61 aa)) enclose the v-SNARE coiled-coil homology domain. Phosphoserine is present on residues Ser167 and Ser168. A helical; Anchor for type IV membrane protein membrane pass occupies residues 189 to 209 (LTIIIIIVSIVFIYIIVSPLC). At 210–220 (GGFTWPSCVKK) the chain is on the vesicular side.

Belongs to the synaptobrevin family. Component of the SNARE complex composed of STX4, SNAP23 and VAMP7 that binds SYT7 during lysosomal exocytosis. Component of the SNARE complex composed of STX7, STX8, VAMP7 and VTI1B that is required for heterotypic fusion of late endosomes with lysosomes. May interact with STX17. Interacts with PICALM. Interacts with RAB21. As to expression, detected in all tissues tested.

Its subcellular location is the cytoplasmic vesicle. The protein localises to the secretory vesicle membrane. The protein resides in the golgi apparatus. It localises to the trans-Golgi network membrane. It is found in the late endosome membrane. Its subcellular location is the lysosome membrane. The protein localises to the endoplasmic reticulum membrane. The protein resides in the phagosome membrane. It localises to the synapse. It is found in the synaptosome. Involved in the targeting and/or fusion of transport vesicles to their target membrane during transport of proteins from the early endosome to the lysosome. Required for heterotypic fusion of late endosomes with lysosomes and homotypic lysosomal fusion. Required for calcium regulated lysosomal exocytosis. Involved in the export of chylomicrons from the endoplasmic reticulum to the cis Golgi. Required for exocytosis of mediators during eosinophil and neutrophil degranulation, and target cell killing by natural killer cells. Required for focal exocytosis of late endocytic vesicles during phagosome formation. This Homo sapiens (Human) protein is Vesicle-associated membrane protein 7 (VAMP7).